The chain runs to 296 residues: Light-independent protochlorophyllide reductase iron-sulfur ATP-binding protein (296 aa).

Residues 10–15 (GIGKST) and lysine 39 contribute to the ATP site. Mg(2+) is bound at residue serine 14. Residues cysteine 95 and cysteine 129 each coordinate [4Fe-4S] cluster. 180 to 181 (NR) is an ATP binding site.

It belongs to the NifH/BchL/ChlL family. Homodimer. Protochlorophyllide reductase is composed of three subunits; ChlL, ChlN and ChlB. It depends on [4Fe-4S] cluster as a cofactor.

The protein resides in the plastid. The protein localises to the chloroplast. The catalysed reaction is chlorophyllide a + oxidized 2[4Fe-4S]-[ferredoxin] + 2 ADP + 2 phosphate = protochlorophyllide a + reduced 2[4Fe-4S]-[ferredoxin] + 2 ATP + 2 H2O. The protein operates within porphyrin-containing compound metabolism; chlorophyll biosynthesis (light-independent). Component of the dark-operative protochlorophyllide reductase (DPOR) that uses Mg-ATP and reduced ferredoxin to reduce ring D of protochlorophyllide (Pchlide) to form chlorophyllide a (Chlide). This reaction is light-independent. The L component serves as a unique electron donor to the NB-component of the complex, and binds Mg-ATP. In Mesostigma viride (Green alga), this protein is Light-independent protochlorophyllide reductase iron-sulfur ATP-binding protein.